A 225-amino-acid chain; its full sequence is UPF0758 protein Shew_3481 (225 aa).

The MPN domain maps to 102–224 (ILSDPDLTRD…IVSFAERGWI (123 aa)). Residues histidine 173, histidine 175, and aspartate 186 each coordinate Zn(2+). The short motif at 173 to 186 (HNHPSGGAEPSHAD) is the JAMM motif element.

Belongs to the UPF0758 family.

The sequence is that of UPF0758 protein Shew_3481 from Shewanella loihica (strain ATCC BAA-1088 / PV-4).